A 381-amino-acid chain; its full sequence is Pentatricopeptide repeat-containing protein 2, mitochondrial (381 aa).

Residues 157-191 (DTTSFNITIDMLFNKQLYESGLEVVGEMKKQGVSL) form a PPR repeat.

This sequence belongs to the PTCD2 family.

It localises to the mitochondrion. Its function is as follows. Involved in mitochondrial RNA maturation and mitochondrial respiratory chain function. This Danio rerio (Zebrafish) protein is Pentatricopeptide repeat-containing protein 2, mitochondrial (ptcd2).